Here is a 336-residue protein sequence, read N- to C-terminus: Galectin-12 (336 aa).

Galectin domains follow at residues 49–183 (YVTT…VGFL) and 212–336 (CSHA…CVHS).

In terms of tissue distribution, not widely expressed. Predominantly expressed in adipose tissue.

The protein resides in the nucleus. In terms of biological role, binds lactose. May participate in the apoptosis of adipocytes. This Homo sapiens (Human) protein is Galectin-12 (LGALS12).